A 342-amino-acid polypeptide reads, in one-letter code: Nicotinate-nucleotide--dimethylbenzimidazole phosphoribosyltransferase (342 aa).

The Proton acceptor role is filled by glutamate 311.

It belongs to the CobT family.

It catalyses the reaction 5,6-dimethylbenzimidazole + nicotinate beta-D-ribonucleotide = alpha-ribazole 5'-phosphate + nicotinate + H(+). It participates in nucleoside biosynthesis; alpha-ribazole biosynthesis; alpha-ribazole from 5,6-dimethylbenzimidazole: step 1/2. Catalyzes the synthesis of alpha-ribazole-5'-phosphate from nicotinate mononucleotide (NAMN) and 5,6-dimethylbenzimidazole (DMB). In Vibrio atlanticus (strain LGP32) (Vibrio splendidus (strain Mel32)), this protein is Nicotinate-nucleotide--dimethylbenzimidazole phosphoribosyltransferase.